We begin with the raw amino-acid sequence, 199 residues long: MEEEMLIPEEEYQKSGVHIGTQVKSSDMKPYIFKIRNDGLYILDVKKTNSKLIAAGKMLARFDPQDILVVAQRQYAFRPVAKFAEVTGAVSITGRFNPGTLTNPSLKFYKEVKVIVVTDPLADVQAMKEAIKIGIPIIALCDANNKTDFVDLVIPTNNKGRRSLAVIYWLLAREILKNRGTITSYDQFKYTIDDFEAQI.

The protein belongs to the universal ribosomal protein uS2 family.

This Thermoplasma volcanium (strain ATCC 51530 / DSM 4299 / JCM 9571 / NBRC 15438 / GSS1) protein is Small ribosomal subunit protein uS2 (rps2).